The chain runs to 482 residues: tRNA sulfurtransferase (482 aa).

Positions 61-165 (EQAIEALACI…GEELFIVSAI (105 aa)) constitute a THUMP domain. Residues 183–184 (LI), Lys-265, Gly-287, and Gln-296 each bind ATP. Cys-344 and Cys-456 are joined by a disulfide. Residues 404–482 (SGDNEVILDI…GFANVKVYRP (79 aa)) enclose the Rhodanese domain. Cys-456 serves as the catalytic Cysteine persulfide intermediate.

This sequence belongs to the ThiI family.

Its subcellular location is the cytoplasm. The enzyme catalyses [ThiI sulfur-carrier protein]-S-sulfanyl-L-cysteine + a uridine in tRNA + 2 reduced [2Fe-2S]-[ferredoxin] + ATP + H(+) = [ThiI sulfur-carrier protein]-L-cysteine + a 4-thiouridine in tRNA + 2 oxidized [2Fe-2S]-[ferredoxin] + AMP + diphosphate. It carries out the reaction [ThiS sulfur-carrier protein]-C-terminal Gly-Gly-AMP + S-sulfanyl-L-cysteinyl-[cysteine desulfurase] + AH2 = [ThiS sulfur-carrier protein]-C-terminal-Gly-aminoethanethioate + L-cysteinyl-[cysteine desulfurase] + A + AMP + 2 H(+). It participates in cofactor biosynthesis; thiamine diphosphate biosynthesis. Functionally, catalyzes the ATP-dependent transfer of a sulfur to tRNA to produce 4-thiouridine in position 8 of tRNAs, which functions as a near-UV photosensor. Also catalyzes the transfer of sulfur to the sulfur carrier protein ThiS, forming ThiS-thiocarboxylate. This is a step in the synthesis of thiazole, in the thiamine biosynthesis pathway. The sulfur is donated as persulfide by IscS. This Aeromonas hydrophila subsp. hydrophila (strain ATCC 7966 / DSM 30187 / BCRC 13018 / CCUG 14551 / JCM 1027 / KCTC 2358 / NCIMB 9240 / NCTC 8049) protein is tRNA sulfurtransferase.